A 465-amino-acid chain; its full sequence is tRNA modification GTPase MnmE (465 aa).

The (6S)-5-formyl-5,6,7,8-tetrahydrofolate site is built by Arg-21, Glu-85, and Lys-124. Residues 220–387 (GVPVAIIGET…LQQRLVAAAH (168 aa)) enclose the TrmE-type G domain. Asn-230 contributes to the K(+) binding site. Residues 230–235 (NAGKST), 249–255 (SDIHGTT), and 274–277 (DTAG) contribute to the GTP site. Ser-234 contributes to the Mg(2+) binding site. K(+) contacts are provided by Ser-249, Ile-251, and Thr-254. Residue Thr-255 coordinates Mg(2+). A (6S)-5-formyl-5,6,7,8-tetrahydrofolate-binding site is contributed by Lys-465.

The protein belongs to the TRAFAC class TrmE-Era-EngA-EngB-Septin-like GTPase superfamily. TrmE GTPase family. Homodimer. Heterotetramer of two MnmE and two MnmG subunits. The cofactor is K(+).

Its subcellular location is the cytoplasm. Its function is as follows. Exhibits a very high intrinsic GTPase hydrolysis rate. Involved in the addition of a carboxymethylaminomethyl (cmnm) group at the wobble position (U34) of certain tRNAs, forming tRNA-cmnm(5)s(2)U34. This is tRNA modification GTPase MnmE from Bacteroides fragilis (strain ATCC 25285 / DSM 2151 / CCUG 4856 / JCM 11019 / LMG 10263 / NCTC 9343 / Onslow / VPI 2553 / EN-2).